The primary structure comprises 357 residues: Ferrochelatase (357 aa).

Fe cation contacts are provided by histidine 193 and glutamate 272.

This sequence belongs to the ferrochelatase family.

The protein localises to the cytoplasm. It carries out the reaction heme b + 2 H(+) = protoporphyrin IX + Fe(2+). Its pathway is porphyrin-containing compound metabolism; protoheme biosynthesis; protoheme from protoporphyrin-IX: step 1/1. Catalyzes the ferrous insertion into protoporphyrin IX. The sequence is that of Ferrochelatase from Hyphomonas neptunium (strain ATCC 15444).